The primary structure comprises 272 residues: METYAVFGNPIAHSKSPFIHQQFAQQLNIEHPYGRVLAPINDFINTLNAFFRAGGKGANVTVPFKEEAFARADELTERAALAGAVNTLKRLEDGRLLGDNTDGVGLLSDLERLSFIRPGLRILLIGAGGASRGVLLPLLSLDCAVTITNRTVSRAEELAKLFAHTGSIQALGMDELEGHEFDLIINATSSGISGDIPAIPSSLIHPGIYCYDMFYQKGKTPFLAWCEQRGSKRNADGLGMLVAQAAHAFLLWHGVLPDVEPVIKQLQEELSA.

Residues 14-16 and Thr-61 contribute to the shikimate site; that span reads SKS. The active-site Proton acceptor is the Lys-65. NADP(+) is bound at residue Glu-77. Residues Asn-86 and Asp-102 each contribute to the shikimate site. NADP(+) is bound by residues 126–130, 149–154, and Met-213; these read GAGGA and NRTVSR. Residue Tyr-215 participates in shikimate binding. Gly-237 provides a ligand contact to NADP(+).

It belongs to the shikimate dehydrogenase family. In terms of assembly, homodimer.

It catalyses the reaction shikimate + NADP(+) = 3-dehydroshikimate + NADPH + H(+). Its pathway is metabolic intermediate biosynthesis; chorismate biosynthesis; chorismate from D-erythrose 4-phosphate and phosphoenolpyruvate: step 4/7. Its function is as follows. Involved in the biosynthesis of the chorismate, which leads to the biosynthesis of aromatic amino acids. Catalyzes the reversible NADPH linked reduction of 3-dehydroshikimate (DHSA) to yield shikimate (SA). The chain is Shikimate dehydrogenase (NADP(+)) from Shigella flexneri.